The sequence spans 179 residues: Inosine/xanthosine triphosphatase (179 aa).

Glutamate 71 is a Mg(2+) binding site. 71 to 72 (EA) provides a ligand contact to substrate.

It belongs to the YjjX NTPase family. Homodimer. It depends on Mg(2+) as a cofactor. Mn(2+) is required as a cofactor.

It catalyses the reaction XTP + H2O = XDP + phosphate + H(+). The enzyme catalyses ITP + H2O = IDP + phosphate + H(+). Phosphatase that hydrolyzes non-canonical purine nucleotides such as XTP and ITP to their respective diphosphate derivatives. Probably excludes non-canonical purines from DNA/RNA precursor pool, thus preventing their incorporation into DNA/RNA and avoiding chromosomal lesions. This Shewanella sp. (strain ANA-3) protein is Inosine/xanthosine triphosphatase.